The chain runs to 173 residues: Crossover junction endodeoxyribonuclease RuvC (173 aa).

Catalysis depends on residues D8, E67, and D139. Residues D8, E67, and D139 each contribute to the Mg(2+) site.

The protein belongs to the RuvC family. Homodimer which binds Holliday junction (HJ) DNA. The HJ becomes 2-fold symmetrical on binding to RuvC with unstacked arms; it has a different conformation from HJ DNA in complex with RuvA. In the full resolvosome a probable DNA-RuvA(4)-RuvB(12)-RuvC(2) complex forms which resolves the HJ. Mg(2+) is required as a cofactor.

Its subcellular location is the cytoplasm. The enzyme catalyses Endonucleolytic cleavage at a junction such as a reciprocal single-stranded crossover between two homologous DNA duplexes (Holliday junction).. Its function is as follows. The RuvA-RuvB-RuvC complex processes Holliday junction (HJ) DNA during genetic recombination and DNA repair. Endonuclease that resolves HJ intermediates. Cleaves cruciform DNA by making single-stranded nicks across the HJ at symmetrical positions within the homologous arms, yielding a 5'-phosphate and a 3'-hydroxyl group; requires a central core of homology in the junction. The consensus cleavage sequence is 5'-(A/T)TT(C/G)-3'. Cleavage occurs on the 3'-side of the TT dinucleotide at the point of strand exchange. HJ branch migration catalyzed by RuvA-RuvB allows RuvC to scan DNA until it finds its consensus sequence, where it cleaves and resolves the cruciform DNA. The polypeptide is Crossover junction endodeoxyribonuclease RuvC (Shewanella putrefaciens (strain CN-32 / ATCC BAA-453)).